A 156-amino-acid chain; its full sequence is Small ribosomal subunit protein uS7 (156 aa).

The protein belongs to the universal ribosomal protein uS7 family. As to quaternary structure, part of the 30S ribosomal subunit. Contacts proteins S9 and S11.

In terms of biological role, one of the primary rRNA binding proteins, it binds directly to 16S rRNA where it nucleates assembly of the head domain of the 30S subunit. Is located at the subunit interface close to the decoding center, probably blocks exit of the E-site tRNA. The protein is Small ribosomal subunit protein uS7 of Campylobacter hominis (strain ATCC BAA-381 / DSM 21671 / CCUG 45161 / LMG 19568 / NCTC 13146 / CH001A).